The following is a 220-amino-acid chain: MASTDDPAGQRPSRAEAIVAHAEQSISEDAIVAAARERAVDMGAGAVTPAVGALLSVLARLTEAKAVVEVGTGAGVSGLWLLSGMREDGVLTTIDVEPEHQRIAKQAFTEAGIGPGRTRLISGRAQDVLTRLADESYDLVFIDADPVDQPQFVVEGVRLLRSGGAIVVHRAALGGRAGDAGANDAEVSAVREAARLIAEDERLTPVLIPLGDGLLAAARD.

S-adenosyl-L-methionine-binding positions include Val47, Glu69, 71 to 72 (GT), Ser77, Asp95, and Val96. Residue Asp143 participates in substrate binding. Asp145 is a binding site for S-adenosyl-L-methionine.

The protein belongs to the class I-like SAM-binding methyltransferase superfamily. Cation-dependent O-methyltransferase family.

The protein is Putative O-methyltransferase Mmcs_3995 of Mycobacterium sp. (strain MCS).